Reading from the N-terminus, the 791-residue chain is Subtilisin-like protease SBT5.6 (791 aa).

The N-terminal stretch at 1-20 (MKKLTSLFPLLFLIPLLASC) is a signal peptide. The propeptide at 21-108 (AEEKQVYIVY…KSHPRKYEAH (88 aa)) is activation peptide. Residues 26–104 (VYIVYFGEHK…VSVFKSHPRK (79 aa)) enclose the Inhibitor I9 domain. The 512-residue stretch at 134 to 645 (ADDRFRVGRN…SGHFRPTKAA (512 aa)) folds into the Peptidase S8 domain. Asp-160 acts as the Charge relay system in catalysis. Residues Asn-193 and Asn-219 are each glycosylated (N-linked (GlcNAc...) asparagine). His-235 (charge relay system) is an active-site residue. The region spanning 400–494 (FAPLVYASNV…VTPTVVDKIL (95 aa)) is the PA domain. N-linked (GlcNAc...) asparagine glycosylation occurs at Asn-417. The active-site Charge relay system is Ser-578. N-linked (GlcNAc...) asparagine glycans are attached at residues Asn-666, Asn-713, and Asn-761.

The protein belongs to the peptidase S8 family.

It localises to the secreted. This chain is Subtilisin-like protease SBT5.6, found in Arabidopsis thaliana (Mouse-ear cress).